Here is a 591-residue protein sequence, read N- to C-terminus: Fidgetin-like protein 1 (591 aa).

2 disordered regions span residues 1-117 (MYSP…KSSL) and 223-249 (GQEP…SQPI). Residues 17-26 (KRPETEENRG) are compositionally biased toward basic and acidic residues. The span at 76–93 (DDDPESIVIDEDDEEDEP) shows a compositional bias: acidic residues. Polar residues predominate over residues 237–249 (RQSSSQSNHSQPI). ATP-binding positions include Ala-319 and 359 to 364 (GTGKTM).

Belongs to the AAA ATPase family. Hexamer. Requires Mg(2+) as cofactor.

The protein localises to the nucleus. It carries out the reaction ATP + H2O = ADP + phosphate + H(+). Functionally, has a role in spindle assembly which acts in the progression through mitosis during embryogenesis. Required for fertility. In Caenorhabditis briggsae, this protein is Fidgetin-like protein 1 (figl-1).